A 463-amino-acid chain; its full sequence is Argininosuccinate lyase (463 aa).

It belongs to the lyase 1 family. Argininosuccinate lyase subfamily.

It is found in the cytoplasm. The enzyme catalyses 2-(N(omega)-L-arginino)succinate = fumarate + L-arginine. It participates in amino-acid biosynthesis; L-arginine biosynthesis; L-arginine from L-ornithine and carbamoyl phosphate: step 3/3. This chain is Argininosuccinate lyase, found in Thiobacillus denitrificans (strain ATCC 25259 / T1).